A 287-amino-acid chain; its full sequence is 4,4'-diapophytoene synthase (287 aa).

(2E,6E)-farnesyl diphosphate contacts are provided by residues 18 to 21 (HSKS), Tyr41, and Arg45. Asp48 and Asp52 together coordinate Mg(2+). Gln165 is a binding site for (2E,6E)-farnesyl diphosphate. Asn168 lines the Mg(2+) pocket. Arg171 contributes to the (2E,6E)-farnesyl diphosphate binding site. Asp172 contacts Mg(2+). Tyr248 lines the (2E,6E)-farnesyl diphosphate pocket.

It belongs to the phytoene/squalene synthase family. CrtM subfamily. The cofactor is Mg(2+).

The catalysed reaction is 2 (2E,6E)-farnesyl diphosphate = 15-cis-4,4'-diapophytoene + 2 diphosphate. The protein operates within carotenoid biosynthesis; staphyloxanthin biosynthesis; staphyloxanthin from farnesyl diphosphate: step 1/5. In terms of biological role, involved in the biosynthesis of the yellow-orange carotenoid staphyloxanthin, which plays a role in the virulence via its protective function against oxidative stress. Catalyzes the head-to-head condensation of two molecules of farnesyl diphosphate (FPP) into the colorless C(30) carotenoid 4,4'-diapophytoene (dehydrosqualene). The sequence is that of 4,4'-diapophytoene synthase (crtM) from Staphylococcus aureus (strain bovine RF122 / ET3-1).